A 230-amino-acid chain; its full sequence is Broad-specificity phosphatase YOR283W (230 aa).

The active-site Tele-phosphohistidine intermediate is the H24. Substrate contacts are provided by residues Q36–G37 and E102–M105. The active-site Proton donor/acceptor is the E102.

The protein belongs to the phosphoglycerate mutase family. BPG-dependent PGAM subfamily.

Its subcellular location is the cytoplasm. The protein resides in the nucleus. Metal-independent phosphatase active against a broad range of phosphorylated substrates including nucleoside tri- and diphosphates, phosphorylated organic acids, and amino acids. Shows no activity against phytic acid, phosphorylated carbohydrates, and nucleoside monophosphates. This chain is Broad-specificity phosphatase YOR283W, found in Saccharomyces cerevisiae (strain ATCC 204508 / S288c) (Baker's yeast).